The sequence spans 394 residues: Phosphopentomutase (394 aa).

Mn(2+) is bound by residues aspartate 13, aspartate 286, histidine 291, aspartate 327, histidine 328, and histidine 339.

The protein belongs to the phosphopentomutase family. Mn(2+) is required as a cofactor.

Its subcellular location is the cytoplasm. It carries out the reaction 2-deoxy-alpha-D-ribose 1-phosphate = 2-deoxy-D-ribose 5-phosphate. The catalysed reaction is alpha-D-ribose 1-phosphate = D-ribose 5-phosphate. The protein operates within carbohydrate degradation; 2-deoxy-D-ribose 1-phosphate degradation; D-glyceraldehyde 3-phosphate and acetaldehyde from 2-deoxy-alpha-D-ribose 1-phosphate: step 1/2. Functionally, isomerase that catalyzes the conversion of deoxy-ribose 1-phosphate (dRib-1-P) and ribose 1-phosphate (Rib-1-P) to deoxy-ribose 5-phosphate (dRib-5-P) and ribose 5-phosphate (Rib-5-P), respectively. This is Phosphopentomutase from Bacillus cereus (strain G9842).